Here is a 130-residue protein sequence, read N- to C-terminus: Albumin-1 C (130 aa).

A signal peptide spans 1–26 (MASVKLASLIVLFATLGMFLTKNVGA). 3 cysteine pairs are disulfide-bonded: cysteine 29–cysteine 46, cysteine 33–cysteine 48, and cysteine 41–cysteine 58. 2 propeptides span residues 64-69 (VFLRTN) and 123-130 (LLKSVSTA).

In terms of processing, the C-terminal glycine may be removed from PA1b. In terms of tissue distribution, major component of both the cotyledons and embryonic axes of mature seeds.

Functionally, PA1b binds to basic 7S globulin (BG) and stimulates its phosphorylation activity. Involved in the signal transduction system to regulate the growth and differentiation as a hormone peptide. Toxic to various insects through binding to a high affinity binding site in the insect gut. The protein is Albumin-1 C of Pisum sativum (Garden pea).